The sequence spans 380 residues: MLIVADENIPLLDAFFEGFGEIRRYPGRSMDAASVKEADVLLVRSVTKVDRQLLEGSRVRFVGTCTIGTDHLDLDYFAEAGIHWSSAPGCNARGVVDYVLGSLLTLADLDGAALPQRTYGVVGAGEVGGRLVRVLHGMGWKVLVCDPLRQAAEGGDFVSLQTVLEQCDVISLHTPLQQGGEHPTWHLLGQAQLAQLRPGAWLINASRGPVVDNLALRELLLDREDVHAVLDVWEGEPQVDLQLADLCTLATPHIAGYSLDGRQRGTAQIYQALCRFLGEAERVQLQDLLPKPPLAQIEFDGEADLGWALATLCRAVYDPRRDDADFRRSLSDDAAEQRAAFDLLRKQYPPRREIEGLAVRLRGEAPQLVQMVNALGAVVV.

The substrate site is built by S45 and T66. Residues D146, T174, 205–207 (ASR), and D231 each bind NAD(+). R207 is a catalytic residue. Residue E236 is part of the active site. The Proton donor role is filled by H253. An NAD(+)-binding site is contributed by G256. Residue Y257 participates in substrate binding.

The protein belongs to the D-isomer specific 2-hydroxyacid dehydrogenase family. PdxB subfamily. As to quaternary structure, homodimer.

It is found in the cytoplasm. It catalyses the reaction 4-phospho-D-erythronate + NAD(+) = (R)-3-hydroxy-2-oxo-4-phosphooxybutanoate + NADH + H(+). It participates in cofactor biosynthesis; pyridoxine 5'-phosphate biosynthesis; pyridoxine 5'-phosphate from D-erythrose 4-phosphate: step 2/5. Catalyzes the oxidation of erythronate-4-phosphate to 3-hydroxy-2-oxo-4-phosphonooxybutanoate. The polypeptide is Erythronate-4-phosphate dehydrogenase (Pseudomonas putida (strain W619)).